We begin with the raw amino-acid sequence, 249 residues long: UPF0758 protein Oant_1909 (249 aa).

An MPN domain is found at 127-249 (VLGSWNKVIE…HASFRGLGLI (123 aa)). Positions 198, 200, and 211 each coordinate Zn(2+). Positions 198-211 (HNHPSGDPTPSRAD) match the JAMM motif motif.

Belongs to the UPF0758 family.

The chain is UPF0758 protein Oant_1909 from Brucella anthropi (strain ATCC 49188 / DSM 6882 / CCUG 24695 / JCM 21032 / LMG 3331 / NBRC 15819 / NCTC 12168 / Alc 37) (Ochrobactrum anthropi).